The chain runs to 310 residues: MNAIKETRFELPGQTGFYKGKVRDVYYVADKLVVVASDRISAFDVVLPRAIPFKGQVLNQIAAKMLAQTADVVPNWILSVPDPSVSIGIKCEPFKVEMVIRGYLAGHAAREYKAGKRTLCGVALPEELKENDKLPAPIITPTTKADEGHDEDISREDLLARGIVSEADYIQLEKYTQALFQRGTELAEKQGLILVDTKYEFGKVGDKIYLIDEIHTPDSSRYFYIDGYAERQAKGEAQKQLSKEFVRQWLIENGFQGKEGQNVPVMTDEIVSSISERYIELYEKVIGESFKKPEESNPEERILKNILKAL.

This sequence belongs to the SAICAR synthetase family.

The enzyme catalyses 5-amino-1-(5-phospho-D-ribosyl)imidazole-4-carboxylate + L-aspartate + ATP = (2S)-2-[5-amino-1-(5-phospho-beta-D-ribosyl)imidazole-4-carboxamido]succinate + ADP + phosphate + 2 H(+). Its pathway is purine metabolism; IMP biosynthesis via de novo pathway; 5-amino-1-(5-phospho-D-ribosyl)imidazole-4-carboxamide from 5-amino-1-(5-phospho-D-ribosyl)imidazole-4-carboxylate: step 1/2. This Cytophaga hutchinsonii (strain ATCC 33406 / DSM 1761 / CIP 103989 / NBRC 15051 / NCIMB 9469 / D465) protein is Phosphoribosylaminoimidazole-succinocarboxamide synthase.